The chain runs to 503 residues: Sarpagan bridge enzyme 1 (503 aa).

The chain crosses the membrane as a helical; Signal-anchor for type II membrane protein span at residues 3–23 (ISVTTSIALATIVFFLYKLAT). Cysteine 442 contacts heme.

Belongs to the cytochrome P450 family. Requires heme as cofactor. In terms of tissue distribution, highly expressed in roots. Expressed at low levels in leaves, stems and flowers.

The protein resides in the endoplasmic reticulum membrane. It catalyses the reaction (19E)-geissoschizine + reduced [NADPH--hemoprotein reductase] + O2 = polyneuridine aldehyde + oxidized [NADPH--hemoprotein reductase] + 2 H2O + H(+). It carries out the reaction tetrahydroalstonine + A + reduced [NADPH--hemoprotein reductase] + O2 = alstonine + AH2 + oxidized [NADPH--hemoprotein reductase] + 2 H2O + H(+). The enzyme catalyses ajmalicine + A + reduced [NADPH--hemoprotein reductase] + O2 = serpentine + AH2 + oxidized [NADPH--hemoprotein reductase] + 2 H2O + H(+). The protein operates within alkaloid biosynthesis; ajmaline biosynthesis. Monooxygenase involved in the biosynthesis of ajmaline-type monoterpenoid indole alkaloids (MIAs) natural products, important plant-derived pharmaceuticals used in the therapy of heart disorders. Converts by cyclization the strictosidine-derived geissoschizine to the sarpagan alkaloid polyneuridine aldehyde, precursor of vomilenine, an intermediate chemical in the biosynthesis of ajmaline. Converts by aromatization the tetrahydro-beta-carboline alkaloids tetrahydroalstonine and ajmalicine to the corresponding beta-carboline alkaloids alstonine and serpentine, respectively. The polypeptide is Sarpagan bridge enzyme 1 (Rauvolfia serpentina (Serpentine wood)).